We begin with the raw amino-acid sequence, 194 residues long: ATP-dependent Clp protease proteolytic subunit (194 aa).

S97 functions as the Nucleophile in the catalytic mechanism. H122 is an active-site residue.

This sequence belongs to the peptidase S14 family. As to quaternary structure, fourteen ClpP subunits assemble into 2 heptameric rings which stack back to back to give a disk-like structure with a central cavity, resembling the structure of eukaryotic proteasomes.

It localises to the cytoplasm. It catalyses the reaction Hydrolysis of proteins to small peptides in the presence of ATP and magnesium. alpha-casein is the usual test substrate. In the absence of ATP, only oligopeptides shorter than five residues are hydrolyzed (such as succinyl-Leu-Tyr-|-NHMec, and Leu-Tyr-Leu-|-Tyr-Trp, in which cleavage of the -Tyr-|-Leu- and -Tyr-|-Trp bonds also occurs).. Functionally, cleaves peptides in various proteins in a process that requires ATP hydrolysis. Has a chymotrypsin-like activity. Plays a major role in the degradation of misfolded proteins. The polypeptide is ATP-dependent Clp protease proteolytic subunit (Thermus thermophilus (strain ATCC BAA-163 / DSM 7039 / HB27)).